The primary structure comprises 619 residues: Mitochondrial Rho GTPase 1-A (619 aa).

Topologically, residues 1–593 (MRKDVRILLV…TQADLKNSTF (593 aa)) are cytoplasmic. The Miro 1 domain occupies 2–168 (RKDVRILLVG…FYYAQKAVLH (167 aa)). GTP is bound by residues Lys14, Gly16, Lys17, Thr18, and Ser19. Thr18 provides a ligand contact to Mg(2+). The Mg(2+) site is built by Pro35 and Asp57. Positions 59, 118, 119, 121, 149, and 150 each coordinate GTP. EF-hand domains lie at 184-219 (SCIK…CFNI) and 304-339 (NAYL…FPYM). Asp197, Asp199, Asp201, Glu208, Asp317, Asp319, Asp321, Ala323, and Glu328 together coordinate Ca(2+). The Miro 2 domain maps to 416–580 (RSVFRCNVLG…YTKLTTMAMY (165 aa)). Positions 427, 429, 430, 431, 432, 433, 447, 529, 531, 559, and 560 each coordinate GTP. Arg427 is a Mg(2+) binding site. The helical; Anchor for type IV membrane protein transmembrane segment at 594–616 (WLRASVGATVFAVLGFAMYKALL) threads the bilayer. Residues 617 to 619 (KQR) lie on the Mitochondrial intermembrane side of the membrane.

It belongs to the mitochondrial Rho GTPase family. As to quaternary structure, homodimer.

It localises to the mitochondrion outer membrane. The catalysed reaction is GTP + H2O = GDP + phosphate + H(+). It catalyses the reaction ATP + H2O = ADP + phosphate + H(+). It carries out the reaction UTP + H2O = UDP + phosphate + H(+). Its function is as follows. Atypical mitochondrial nucleoside-triphosphatase (NTPase) involved in mitochondrial trafficking. Probably involved in control of anterograde transport of mitochondria and their subcellular distribution. Can hydrolyze GTP, ATP and UTP. The polypeptide is Mitochondrial Rho GTPase 1-A (rhot1a) (Danio rerio (Zebrafish)).